A 460-amino-acid polypeptide reads, in one-letter code: Argininosuccinate lyase (460 aa).

Belongs to the lyase 1 family. Argininosuccinate lyase subfamily.

Its subcellular location is the cytoplasm. It carries out the reaction 2-(N(omega)-L-arginino)succinate = fumarate + L-arginine. Its pathway is amino-acid biosynthesis; L-arginine biosynthesis; L-arginine from L-ornithine and carbamoyl phosphate: step 3/3. The polypeptide is Argininosuccinate lyase (Campylobacter jejuni (strain RM1221)).